A 357-amino-acid polypeptide reads, in one-letter code: Inner membrane protein YcfT (357 aa).

The Cytoplasmic segment spans residues 1–12; sequence MKQKELWINQIK. The helical transmembrane segment at 13 to 33 threads the bilayer; the sequence is GLCICLVVIYHSVITFYPHLT. Topologically, residues 34–49 are periplasmic; it reads TFQHPLSEVLSKCWIY. Residues 50-70 form a helical membrane-spanning segment; the sequence is FNLYLAPFRMPVFFFISGYLI. At 71–86 the chain is on the cytoplasmic side; sequence RRYIDSVPWGNCLDKR. The chain crosses the membrane as a helical span at residues 87–107; sequence IWNIFWVLALWGVVQWLALSA. At 108-135 the chain is on the periplasmic side; that stretch reads LNQWLAPERDLSNASNAAYADSTGEFLH. Residues 136-156 form a helical membrane-spanning segment; sequence GMITASTSLWYLYALIVYFVV. The Cytoplasmic segment spans residues 157-162; that stretch reads CKIFSR. A helical membrane pass occupies residues 163-183; that stretch reads LALPLFALFVLLSVAVNFVPT. The Periplasmic portion of the chain corresponds to 184 to 196; it reads PWWGMNSVIRNLP. A helical transmembrane segment spans residues 197 to 217; sequence YYSLGAWFGATIMTCVKEVPL. Topologically, residues 218–231 are cytoplasmic; it reads RRHLLMASLLTVLA. The chain crosses the membrane as a helical span at residues 232–252; it reads VGAWLFTISLLLSLVSIVVIM. At 253-310 the chain is on the periplasmic side; the sequence is KLFYQYEQRFGMRSTSLLNVIGSNTIAIYTTHRILVEIFSLTLLAQMNAARWSPQVEL. The chain crosses the membrane as a helical span at residues 311-331; the sequence is TLLLVYPFVSLFICTVAGLLV. At 332 to 357 the chain is on the cytoplasmic side; it reads RKLSQRAFSDLLFSPPSLPAAVSYSR.

Belongs to the acyltransferase 3 family.

It localises to the cell inner membrane. This is Inner membrane protein YcfT (ycfT) from Escherichia coli (strain K12).